We begin with the raw amino-acid sequence, 325 residues long: Beta-1,3-galactosyltransferase 6 (325 aa).

Residues 1–11 (MKVFRRAWRHR) lie on the Cytoplasmic side of the membrane. The chain crosses the membrane as a helical; Signal-anchor for type II membrane protein span at residues 12–30 (VALGLGGLAFCGTTLLYLA). Over 31–325 (RCASEGETPS…QCCQRKEGVP (295 aa)) the chain is Lumenal. A glycan (N-linked (GlcNAc...) asparagine) is linked at Asn127.

The protein belongs to the glycosyltransferase 31 family. The cofactor is Mn(2+).

The protein localises to the golgi apparatus. The protein resides in the golgi stack membrane. It carries out the reaction 3-O-(beta-D-galactosyl-(1-&gt;4)-beta-D-xylosyl)-L-seryl-[protein] + UDP-alpha-D-galactose = 3-O-(beta-D-galactosyl-(1-&gt;3)-beta-D-galactosyl-(1-&gt;4)-beta-D-xylosyl)-L-seryl-[protein] + UDP + H(+). The protein operates within glycan metabolism; chondroitin sulfate biosynthesis. It functions in the pathway glycan metabolism; heparan sulfate biosynthesis. In terms of biological role, beta-1,3-galactosyltransferase that transfers galactose from UDP-galactose to substrates with a terminal beta-linked galactose residue. Has a preference for galactose-beta-1,4-xylose that is found in the linker region of glycosaminoglycans, such as heparan sulfate and chondroitin sulfate. Has no activity towards substrates with terminal glucosamine or galactosamine residues. In Mus musculus (Mouse), this protein is Beta-1,3-galactosyltransferase 6 (B3galt6).